The primary structure comprises 338 residues: Phosphoribosylformylglycinamidine cyclo-ligase (338 aa).

This sequence belongs to the AIR synthase family.

It is found in the cytoplasm. The catalysed reaction is 2-formamido-N(1)-(5-O-phospho-beta-D-ribosyl)acetamidine + ATP = 5-amino-1-(5-phospho-beta-D-ribosyl)imidazole + ADP + phosphate + H(+). The protein operates within purine metabolism; IMP biosynthesis via de novo pathway; 5-amino-1-(5-phospho-D-ribosyl)imidazole from N(2)-formyl-N(1)-(5-phospho-D-ribosyl)glycinamide: step 2/2. The polypeptide is Phosphoribosylformylglycinamidine cyclo-ligase (Lactococcus lactis subsp. lactis (strain IL1403) (Streptococcus lactis)).